The sequence spans 128 residues: UPF0102 protein MAV_3752 (128 aa).

This sequence belongs to the UPF0102 family.

The polypeptide is UPF0102 protein MAV_3752 (Mycobacterium avium (strain 104)).